Consider the following 274-residue polypeptide: MAIHLYKTSTPSTRNRAVDSQVKSNPRNNLIYGQHRCGKGRNARGIITAGHRGGGHKRLYRKIDFRRNEKDIYGRIVTIEYDPNRNAYICLIHYGDGEKRYILHPRGAIIGDTIVSGTEVPIKMGNALPLTDMPLGTAIHNIEITLGKGGQLARAAGAVAKLIAKEGKSATLKLPSGEVRLISKNCSATVGQVGNVGVNQKSLGRAGSKCWLGKRPVVRGVVMNPVDHPHGGGEGRAPIGRKKPTTPWGYPALGRRSRKRNKYSDNLILRRRSK.

Disordered stretches follow at residues M1–K23 and N224–K274.

Belongs to the universal ribosomal protein uL2 family. Part of the 50S ribosomal subunit.

It localises to the plastid. The protein resides in the chloroplast. The protein is Large ribosomal subunit protein uL2cz/uL2cy (rpl2-A) of Vitis vinifera (Grape).